A 378-amino-acid chain; its full sequence is Probable mannosyltransferase MNT3 (378 aa).

Residues 1 to 4 (MLWH) lie on the Cytoplasmic side of the membrane. The helical; Signal-anchor for type II membrane protein transmembrane segment at 5–25 (LVFILIAILLLTFSPKIESLF) threads the bilayer. Residues 26-378 (KSFTINKPTK…TNHFLNILHN (353 aa)) are Lumenal-facing. N-linked (GlcNAc...) asparagine glycosylation is found at asparagine 73 and asparagine 149.

This sequence belongs to the glycosyltransferase 15 family.

The protein resides in the membrane. Transfers an alpha-D-mannosyl residue from GDP-mannose into lipid-linked oligosaccharide, forming an alpha-(1-&gt;2)-D-mannosyl-D-mannose linkage. The protein is Probable mannosyltransferase MNT3 (MNT3) of Candida albicans (strain SC5314 / ATCC MYA-2876) (Yeast).